We begin with the raw amino-acid sequence, 628 residues long: Junctophilin-4 (628 aa).

Topologically, residues 1 to 606 (MSPGGKFDFD…RPAQPGAANP (606 aa)) are cytoplasmic. 6 MORN repeats span residues 50–72 (LGVF…KREG), 74–95 (GVER…KGRS), 96–117 (GVWE…FQDG), 118–140 (YGTE…KRHG), 141–163 (YGVR…RTSL), and 164–186 (DSGH…EGGS). 2 disordered regions span residues 158 to 214 (PRRT…RTPA) and 231 to 276 (GGRR…LIEG). Residues 170–179 (PPTPPPPLPL) are compositionally biased toward pro residues. Composition is skewed to low complexity over residues 231-241 (GGRRSSLGSKR) and 253-272 (GSTG…APPA). MORN repeat units lie at residues 317 to 339 (YGRT…RLVH) and 340 to 362 (GGRV…KVDR). Positions 415–602 (DLQPMLEAPG…AATERPAQPG (188 aa)) are disordered. Over residues 432 to 443 (EGSDTEPLDEDS) the composition is skewed to acidic residues. 2 stretches are compositionally biased toward low complexity: residues 453–467 (PSEG…PASS) and 528–541 (GSPL…SSGS). A helical; Anchor for type IV membrane protein membrane pass occupies residues 607–628 (LVVGAVALLDLSLAFLFSQLLT).

It belongs to the junctophilin family.

It localises to the cell membrane. The protein resides in the endoplasmic reticulum membrane. In terms of biological role, junctophilins contribute to the formation of junctional membrane complexes (JMCs) which link the plasma membrane with the endoplasmic or sarcoplasmic reticulum in excitable cells. Provides a structural foundation for functional cross-talk between the cell surface and intracellular calcium release channels. JPH4 is brain-specific and appears to have an active role in certain neurons involved in motor coordination and memory. The chain is Junctophilin-4 (JPH4) from Homo sapiens (Human).